Here is a 334-residue protein sequence, read N- to C-terminus: Serine/Arginine-related protein 53 (334 aa).

Positions 1 to 13 are enriched in basic and acidic residues; sequence MGRRSSDTEEESR. 3 disordered regions span residues 1 to 179, 201 to 220, and 243 to 290; these read MGRR…HLPP, LKAK…EDQA, and QTFR…SIPT. Composition is skewed to basic residues over residues 14 to 24 and 35 to 50; these read SKRKKKHRRRS and YSRK…KSRS. Residues 51 to 62 are compositionally biased toward basic and acidic residues; that stretch reads WSRDLQPRSHSY. The segment covering 78-118 has biased composition (basic residues); the sequence is SRRKRSRSRSRGRGKSYRVQRSRSKSRTRRSRSRPRLRSHS. Composition is skewed to basic and acidic residues over residues 132–166, 201–218, and 247–259; these read RSRD…KRGE, LKAK…KEED, and SSKE…EPSE. Positions 180-236 form a coiled coil; it reads AEQAKARLQLVLEAAAKADEALKAKERNEEEAKRRKEEDQATLVEQVKRVKEIEAIE.

Interacts (via Arg/Ser-rich domain) with LUC7L3, RBM39 and RSF1. Phosphorylated. In terms of tissue distribution, widely expressed. Expressed in brain, spinal cord, cerebellum.

It localises to the nucleus. It is found in the nucleus speckle. The protein localises to the cytoplasm. Its function is as follows. Has a role in alternative splicing and transcription regulation. Involved in both constitutive and alternative pre-mRNA splicing. May have a role in the recognition of the 3' splice site during the second step of splicing. The chain is Serine/Arginine-related protein 53 (RSRC1) from Homo sapiens (Human).